A 312-amino-acid chain; its full sequence is Putative electron transfer flavoprotein subunit YdiR (312 aa).

Residue 254-282 coordinates FAD; sequence LYLTLGISGQIQHMVGGNGAKVIVAINKD.

The protein belongs to the ETF alpha-subunit/FixB family. As to quaternary structure, ydiR and YdiQ form a heterodimer.

Its function is as follows. May play a role in a redox process. This is Putative electron transfer flavoprotein subunit YdiR (ydiR) from Escherichia coli (strain K12).